Reading from the N-terminus, the 353-residue chain is Photosystem II D2 protein (353 aa).

N-acetylthreonine is present on Thr-2. Thr-2 carries the post-translational modification Phosphothreonine. The helical transmembrane segment at 41–61 threads the bilayer; the sequence is CAYFALGGWFTGTTFVTSWYT. His-118 provides a ligand contact to chlorophyll a. Residues 125-141 form a helical membrane-spanning segment; the sequence is GFMLRQFELARSVQLRP. Residues Gln-130 and Asn-143 each contribute to the pheophytin a site. The helical transmembrane segment at 153–166 threads the bilayer; sequence VFVSVFLIYPLGQS. His-198 is a binding site for chlorophyll a. A helical membrane pass occupies residues 208–228; it reads AALLCAIHGATVENTLFEDGD. A plastoquinone contacts are provided by His-215 and Phe-262. His-215 serves as a coordination point for Fe cation. Residue His-269 coordinates Fe cation. A helical transmembrane segment spans residues 279–295; it reads GLWMSALGVVGLALNLR.

This sequence belongs to the reaction center PufL/M/PsbA/D family. As to quaternary structure, PSII is composed of 1 copy each of membrane proteins PsbA, PsbB, PsbC, PsbD, PsbE, PsbF, PsbH, PsbI, PsbJ, PsbK, PsbL, PsbM, PsbT, PsbX, PsbY, PsbZ, Psb30/Ycf12, at least 3 peripheral proteins of the oxygen-evolving complex and a large number of cofactors. It forms dimeric complexes. It depends on The D1/D2 heterodimer binds P680, chlorophylls that are the primary electron donor of PSII, and subsequent electron acceptors. It shares a non-heme iron and each subunit binds pheophytin, quinone, additional chlorophylls, carotenoids and lipids. There is also a Cl(-1) ion associated with D1 and D2, which is required for oxygen evolution. The PSII complex binds additional chlorophylls, carotenoids and specific lipids. as a cofactor.

The protein resides in the plastid. Its subcellular location is the chloroplast thylakoid membrane. It carries out the reaction 2 a plastoquinone + 4 hnu + 2 H2O = 2 a plastoquinol + O2. Its function is as follows. Photosystem II (PSII) is a light-driven water:plastoquinone oxidoreductase that uses light energy to abstract electrons from H(2)O, generating O(2) and a proton gradient subsequently used for ATP formation. It consists of a core antenna complex that captures photons, and an electron transfer chain that converts photonic excitation into a charge separation. The D1/D2 (PsbA/PsbD) reaction center heterodimer binds P680, the primary electron donor of PSII as well as several subsequent electron acceptors. D2 is needed for assembly of a stable PSII complex. This chain is Photosystem II D2 protein, found in Ceratophyllum demersum (Rigid hornwort).